Here is a 702-residue protein sequence, read N- to C-terminus: Cytolytic toxin-beta (702 aa).

The tract at residues 2 to 264 (PSDILVVAAL…EAPQLMADSS (263 aa)) is structural MACPF/CDC pore-forming domain. 3 N-linked (GlcNAc...) asparagine glycosylation sites follow: Asn-94, Asn-101, and Asn-286. A structural FAT domain region spans residues 265–387 (TPILRKVRNT…DIIEEAKHKV (123 aa)). The thioredoxin (THX) domain stretch occupies residues 388–515 (VLSKSQMARE…PRIPPVETIQ (128 aa)). In terms of domain architecture, B30.2/SPRY spans 504–702 (SNPRIPPVET…ANGQIKLKGE (199 aa)).

This sequence belongs to the SNTX/VTX toxin family. Heterodimer of alpha and beta subunits; non-covalently linked. Also associates into tetramers or even higher aggregates. Intrachain disulfide bonds may be present in the heterodimer. As to expression, expressed by the venom gland.

It localises to the secreted. This heterodimer induces potent hemolytic activities (when tested on rabbit erythrocytes, EC(50)=25-56 ng/mL) due to its ability to form pores in the cell membrane. The pore may be composed of 10 alpha/beta heterodimers. The toxin shows cardiovascular effects that include a vasorelaxant action that may involve the L-arginine-nitric oxid synthase pathway. In addition, it displays edema-inducing activities, increases vascular permeability. It also shows myotoxic activities and interferes irreversibly with neuromuscular function. It also induces irreversible platelet aggregation in rabbit or rat (but not in human or mouse) whole blood. In addition, it has been observed to increase spontaneous quantal acetylcholine release from isolated frog cutaneous pectoris motor endings. In Scorpaena plumieri (Spotted scorpionfish), this protein is Cytolytic toxin-beta.